The sequence spans 695 residues: N-terminal acetyltransferase A complex subunit-like protein C418.02 (695 aa).

TPR repeat units lie at residues 8-41 (EAFL…KPKH), 43-75 (DSVA…DPKS), 76-109 (QFCW…SPNN), 111-143 (SLWY…DSSN), 145-177 (EYRL…CNLS), 217-250 (FNFE…FPNR), 262-296 (WNFY…GISV), 365-398 (LWCT…TPTY), 399-432 (PELF…DKSD), and 477-510 (VWFL…YKKW).

As to quaternary structure, component of the N-terminal acetyltransferase A (NatA) complex.

The protein localises to the cytoplasm. The protein resides in the nucleus. Non-catalytic component of the NatA N-terminal acetyltransferase, which catalyzes acetylation of proteins beginning with Met-Ser, Met-Gly and Met-Ala. N-acetylation plays a role in normal eukaryotic translation and processing, protect against proteolytic degradation and protein turnover. This Schizosaccharomyces pombe (strain 972 / ATCC 24843) (Fission yeast) protein is N-terminal acetyltransferase A complex subunit-like protein C418.02.